The primary structure comprises 507 residues: Archaeal-type glutamate synthase [NADPH] (507 aa).

4Fe-4S ferredoxin-type domains lie at 10–39 and 41–70; these read FVVE…YDEN and NRVY…VRRN. [4Fe-4S] cluster-binding residues include Cys-19, Cys-22, Cys-25, Cys-29, Cys-50, Cys-53, Cys-56, and Cys-60.

Belongs to the glutamate synthase family. Requires FMN as cofactor.

It catalyses the reaction 2 L-glutamate + NADP(+) = L-glutamine + 2-oxoglutarate + NADPH + H(+). In Thermotoga neapolitana (strain ATCC 49049 / DSM 4359 / NBRC 107923 / NS-E), this protein is Archaeal-type glutamate synthase [NADPH].